The sequence spans 290 residues: 33 kDa chaperonin (290 aa).

Disulfide bonds link C235–C237 and C268–C271.

It belongs to the HSP33 family. Under oxidizing conditions two disulfide bonds are formed involving the reactive cysteines. Under reducing conditions zinc is bound to the reactive cysteines and the protein is inactive.

The protein localises to the cytoplasm. In terms of biological role, redox regulated molecular chaperone. Protects both thermally unfolding and oxidatively damaged proteins from irreversible aggregation. Plays an important role in the bacterial defense system toward oxidative stress. This chain is 33 kDa chaperonin, found in Streptococcus pyogenes serotype M28 (strain MGAS6180).